We begin with the raw amino-acid sequence, 408 residues long: Protein CNPPD1 (408 aa).

A helical membrane pass occupies residues 233–253; the sequence is CLLAVAYVSSVALAVASMAVI.

This sequence belongs to the CNPPD1 family.

It is found in the membrane. The polypeptide is Protein CNPPD1 (Cnppd1) (Rattus norvegicus (Rat)).